Reading from the N-terminus, the 229-residue chain is MAKKSKQLCAALEKIDSTKAYSVEEAVALAKETNFAKFDATVEVAYNLNIDVKKADQQIRGAMVLPNGTGKTSRVLVFARGAKAEEAKAAGADFVGEDDLVAKINDGWLDFDVVIATPDMMALVGRLGRVLGPRNLMPNPKTGTVTMDVAKAVEESKGGKITYRADRAGNVQAIIGKVSFEAEKLVENFKAFNETIQKAKPATAKGTYVTNLTITTTQGVGIKVDVNSL.

This sequence belongs to the universal ribosomal protein uL1 family. In terms of assembly, part of the 50S ribosomal subunit.

Binds directly to 23S rRNA. The L1 stalk is quite mobile in the ribosome, and is involved in E site tRNA release. Its function is as follows. Protein L1 is also a translational repressor protein, it controls the translation of the L11 operon by binding to its mRNA. This is Large ribosomal subunit protein uL1 from Streptococcus pneumoniae (strain Taiwan19F-14).